The chain runs to 321 residues: Lipoyl synthase (321 aa).

The [4Fe-4S] cluster site is built by Cys-68, Cys-73, Cys-79, Cys-94, Cys-98, Cys-101, and Ser-308. The region spanning 80–297 (FNHGTATFMI…KVLADELGFT (218 aa)) is the Radical SAM core domain.

This sequence belongs to the radical SAM superfamily. Lipoyl synthase family. Requires [4Fe-4S] cluster as cofactor.

The protein localises to the cytoplasm. The enzyme catalyses [[Fe-S] cluster scaffold protein carrying a second [4Fe-4S](2+) cluster] + N(6)-octanoyl-L-lysyl-[protein] + 2 oxidized [2Fe-2S]-[ferredoxin] + 2 S-adenosyl-L-methionine + 4 H(+) = [[Fe-S] cluster scaffold protein] + N(6)-[(R)-dihydrolipoyl]-L-lysyl-[protein] + 4 Fe(3+) + 2 hydrogen sulfide + 2 5'-deoxyadenosine + 2 L-methionine + 2 reduced [2Fe-2S]-[ferredoxin]. It functions in the pathway protein modification; protein lipoylation via endogenous pathway; protein N(6)-(lipoyl)lysine from octanoyl-[acyl-carrier-protein]: step 2/2. Functionally, catalyzes the radical-mediated insertion of two sulfur atoms into the C-6 and C-8 positions of the octanoyl moiety bound to the lipoyl domains of lipoate-dependent enzymes, thereby converting the octanoylated domains into lipoylated derivatives. The polypeptide is Lipoyl synthase (Shewanella denitrificans (strain OS217 / ATCC BAA-1090 / DSM 15013)).